Consider the following 285-residue polypeptide: Sulfotransferase 2A6 (285 aa).

A 3'-phosphoadenylyl sulfate-binding site is contributed by 44–49 (KSGTNW). H99 acts as the Proton acceptor in catalysis. Residues R121, S129, Y184, 218 to 223 (SSFQAM), and 247 to 249 (RKG) each bind 3'-phosphoadenylyl sulfate.

The protein belongs to the sulfotransferase 1 family. In terms of assembly, oligomer.

The protein resides in the cytoplasm. Its subcellular location is the cytosol. The enzyme catalyses an alcohol + 3'-phosphoadenylyl sulfate = an alkyl sulfate + adenosine 3',5'-bisphosphate + H(+). The catalysed reaction is glycolithocholate + 3'-phosphoadenylyl sulfate = sulfoglycolithocholate + adenosine 3',5'-bisphosphate + H(+). It catalyses the reaction taurolithocholate + 3'-phosphoadenylyl sulfate = taurolithocholate 3-sulfate + adenosine 3',5'-bisphosphate + H(+). It carries out the reaction 3beta-hydroxyandrost-5-en-17-one + 3'-phosphoadenylyl sulfate = dehydroepiandrosterone 3-sulfate + adenosine 3',5'-bisphosphate + H(+). Its function is as follows. Sulfotransferase that utilizes 3'-phospho-5'-adenylyl sulfate (PAPS) as sulfonate donor to catalyze the sulfonation of the hydroxyl group of hydroxysteroids and bile acids. The polypeptide is Sulfotransferase 2A6 (Mus musculus (Mouse)).